A 126-amino-acid chain; its full sequence is UPF0538 protein C2orf76 homolog (126 aa).

The protein belongs to the UPF0538 family.

The protein is UPF0538 protein C2orf76 homolog of Xenopus tropicalis (Western clawed frog).